A 149-amino-acid chain; its full sequence is uncharacterized protein (149 aa).

This is an uncharacterized protein from Acanthamoeba polyphaga mimivirus (APMV).